The primary structure comprises 62 residues: Delta-theraphotoxin-Cg1a 3 (62 aa).

The first 21 residues, 1 to 21, serve as a signal peptide directing secretion; sequence MKTSILFVIFSLALVFALSPA. Positions 22 to 29 are excised as a propeptide; that stretch reads TEIEETDR. Disulfide bonds link cysteine 31–cysteine 46, cysteine 38–cysteine 51, and cysteine 45–cysteine 58.

Belongs to the neurotoxin 10 (Hwtx-1) family. 33 (Jztx-1) subfamily. As to expression, expressed by the venom gland.

The protein resides in the secreted. Moderately inhibits voltage-gated sodium channels and weakly inhibits voltage-gated potassium channel. Inhibits the inactivation of rat Nav1.2/SCN2A (IC(50)=870 nM), rat Nav1.3/SCN3A (IC(50)=845 nM), rat Nav1.4/SCN4A (IC(50)=339 nM), human Nav1.5/SCN5A (IC(50)=335 nM) and human Nav1.7/SCN9A sodium channels (IC(50)=348 nM). The toxin delays the inactivation of sodium channels without affecting the activation and steady-state inactivation kinetics in the physiological range of voltages. Site-directed mutagenesis of the sodium channel indicates that the toxin interacts with site 3 located at the extracellular S3-S4 linker of domain IV. On potassium channels, it inhibits activation of channels with an IC(50) of 8.05 uM through a voltage sensor-trapping mechanism. It increases muscle contraction in several assays (mouse phrenic nerve-diaphragm, toad heart, rat vas deferens) and is suggested to act both presynaptically and postsynaptically. The protein is Delta-theraphotoxin-Cg1a 3 of Chilobrachys guangxiensis (Chinese earth tiger tarantula).